Here is a 74-residue protein sequence, read N- to C-terminus: Protein krueppel (74 aa).

4 C2H2-type zinc fingers span residues 1 to 4 (ERTH), 10 to 32 (FECQECHKRFTRDHHLKTHMRLH), 38 to 60 (YRCEHCDRQFVQVANLRRHLRVH), and 66 to 74 (YGCEHCSMK).

Belongs to the krueppel C2H2-type zinc-finger protein family.

The protein resides in the nucleus. In terms of biological role, krueppel is a gap class segmentation protein. The sequence is that of Protein krueppel (Kr) from Tribolium castaneum (Red flour beetle).